We begin with the raw amino-acid sequence, 119 residues long: Beta-2-microglobulin (119 aa).

An N-terminal signal peptide occupies residues 1 to 20 (MARSVAVVFLMLLSVVCLDA). An Ig-like C1-type domain is found at 25-114 (PQVQVYTRHP…TTLKEPKVVT (90 aa)). Residues Cys-45 and Cys-100 are joined by a disulfide bond.

This sequence belongs to the beta-2-microglobulin family. In terms of assembly, heterodimer of an alpha chain and a beta chain. Beta-2-microglobulin is the beta-chain of major histocompatibility complex class I molecules.

Its subcellular location is the secreted. In terms of biological role, component of the class I major histocompatibility complex (MHC). Involved in the presentation of peptide antigens to the immune system. This Cricetulus griseus (Chinese hamster) protein is Beta-2-microglobulin (B2M).